We begin with the raw amino-acid sequence, 199 residues long: Alkyl hydroperoxide reductase C (199 aa).

Residues 2 to 163 enclose the Thioredoxin domain; the sequence is VLVTYPAPDF…TLRMIDALHF (162 aa). The active-site Cysteine sulfenic acid (-SOH) intermediate is the C50.

Belongs to the peroxiredoxin family. AhpC/Prx1 subfamily. As to quaternary structure, homodimer; disulfide-linked, upon oxidation. 5 homodimers assemble to form a ring-like decamer.

It is found in the cytoplasm. The catalysed reaction is a hydroperoxide + NADH + H(+) = an alcohol + NAD(+) + H2O. In terms of biological role, thiol-specific peroxidase that catalyzes the reduction of hydrogen peroxide and organic hydroperoxides to water and alcohols, respectively. Plays a role in cell protection against oxidative stress by detoxifying peroxides. The chain is Alkyl hydroperoxide reductase C from Buchnera aphidicola subsp. Baizongia pistaciae (strain Bp).